Consider the following 729-residue polypeptide: Fatty acid oxidation complex subunit alpha (729 aa).

The tract at residues Met1–Lys189 is enoyl-CoA hydratase/isomerase. Residue Asp296 coordinates substrate. Positions Glu311 to Ala729 are 3-hydroxyacyl-CoA dehydrogenase. Residues Met324, Asp343, Val400–Glu402, Lys407, and Ser429 each bind NAD(+). His450 (for 3-hydroxyacyl-CoA dehydrogenase activity) is an active-site residue. An NAD(+)-binding site is contributed by Asn453. Asn500 and Tyr660 together coordinate substrate. The interval Arg708 to Ala729 is disordered.

It in the N-terminal section; belongs to the enoyl-CoA hydratase/isomerase family. In the C-terminal section; belongs to the 3-hydroxyacyl-CoA dehydrogenase family. In terms of assembly, heterotetramer of two alpha chains (FadB) and two beta chains (FadA).

It catalyses the reaction a (3S)-3-hydroxyacyl-CoA + NAD(+) = a 3-oxoacyl-CoA + NADH + H(+). The catalysed reaction is a (3S)-3-hydroxyacyl-CoA = a (2E)-enoyl-CoA + H2O. It carries out the reaction a 4-saturated-(3S)-3-hydroxyacyl-CoA = a (3E)-enoyl-CoA + H2O. The enzyme catalyses (3S)-3-hydroxybutanoyl-CoA = (3R)-3-hydroxybutanoyl-CoA. It catalyses the reaction a (3Z)-enoyl-CoA = a 4-saturated (2E)-enoyl-CoA. The catalysed reaction is a (3E)-enoyl-CoA = a 4-saturated (2E)-enoyl-CoA. It participates in lipid metabolism; fatty acid beta-oxidation. Involved in the aerobic and anaerobic degradation of long-chain fatty acids via beta-oxidation cycle. Catalyzes the formation of 3-oxoacyl-CoA from enoyl-CoA via L-3-hydroxyacyl-CoA. It can also use D-3-hydroxyacyl-CoA and cis-3-enoyl-CoA as substrate. The polypeptide is Fatty acid oxidation complex subunit alpha (Escherichia coli O7:K1 (strain IAI39 / ExPEC)).